The sequence spans 192 residues: Small ribosomal subunit protein eS7 (192 aa).

Belongs to the eukaryotic ribosomal protein eS7 family.

This is Small ribosomal subunit protein eS7 (RpS7) from Anopheles gambiae (African malaria mosquito).